Here is a 492-residue protein sequence, read N- to C-terminus: Homoserine O-acetyltransferase (492 aa).

One can recognise an AB hydrolase-1 domain in the interval 47 to 354 (NVILVCHALT…NYGHDAFLLE (308 aa)). Serine 152 acts as the Nucleophile in catalysis. Substrate is bound at residue arginine 221. Catalysis depends on residues aspartate 315 and histidine 348. Aspartate 349 serves as a coordination point for substrate. CBS domains are found at residues 375 to 432 (MKLD…FTTL) and 436 to 492 (LTKN…HRCT).

This sequence belongs to the AB hydrolase superfamily. MetX family. In terms of assembly, homodimer.

The protein resides in the cytoplasm. It catalyses the reaction L-homoserine + acetyl-CoA = O-acetyl-L-homoserine + CoA. It functions in the pathway amino-acid biosynthesis; L-methionine biosynthesis via de novo pathway; O-acetyl-L-homoserine from L-homoserine: step 1/1. Transfers an acetyl group from acetyl-CoA to L-homoserine, forming acetyl-L-homoserine. The polypeptide is Homoserine O-acetyltransferase (Methanosalsum zhilinae (strain DSM 4017 / NBRC 107636 / OCM 62 / WeN5) (Methanohalophilus zhilinae)).